Reading from the N-terminus, the 324-residue chain is 6-methylsalicylic acid decarboxylase (324 aa).

Zn(2+) contacts are provided by histidine 7, histidine 9, histidine 157, and aspartate 274.

It belongs to the metallo-dependent hydrolases superfamily. ACMSD family. Monomer.

The protein resides in the cytoplasm. It localises to the cytosol. The catalysed reaction is 6-methylsalicylate + H(+) = 3-methylphenol + CO2. It participates in mycotoxin biosynthesis; patulin biosynthesis. In terms of biological role, 6-methylsalicylic acid decarboxylase; part of the gene cluster that mediates the biosynthesis of patulin, an acetate-derived tetraketide mycotoxin produced by several fungal species that shows antimicrobial properties against several bacteria. PatG catalyzes the decarboxylation of 6-methylsalicylic acid to yield m-cresol. The pathway begins with the synthesis of 6-methylsalicylic acid by the polyketide synthase (PKS) patK via condensation of acetate and malonate units. The 6-methylsalicylic acid decarboxylase patG then catalyzes the decarboxylation of 6-methylsalicylic acid to yield m-cresol (also known as 3-methylphenol). These first reactions occur in the cytosol. The intermediate m-cresol is then transported into the endoplasmic reticulum where the cytochrome P450 monooxygenase patH converts it to m-hydroxybenzyl alcohol, which is further converted to gentisyl alcohol by the cytochrome P450 monooxygenase patI. The oxidoreductases patJ and patO further convert gentisyl alcohol to isoepoxydon in the vacuole. PatN catalyzes then the transformation of isoepoxydon into phyllostine. The cluster protein patF is responsible for the conversion from phyllostine to neopatulin whereas the alcohol dehydrogenase patD converts neopatulin to E-ascladiol. The steps between isoepoxydon and E-ascladiol occur in the cytosol, and E-ascladiol is probably secreted to the extracellular space by one of the cluster-specific transporters patC or patM. Finally, the secreted patulin synthase patE catalyzes the conversion of E-ascladiol to patulin. This chain is 6-methylsalicylic acid decarboxylase, found in Penicillium expansum (Blue mold rot fungus).